The sequence spans 248 residues: Mannose-binding protein C (248 aa).

The signal sequence occupies residues 1-20 (MSLFPSLPLLLLSMVAASYS). The 58-residue stretch at 42–99 (GINGFPGKDGRDGTKGEKGEPGQGLRGLQGPPGKLGPPGNPGPSGSPGPKGQKGDPGK) folds into the Collagen-like domain. The tract at residues 43–113 (INGFPGKDGR…DSSLAASERK (71 aa)) is disordered. Position 47 is a hydroxyproline (Pro-47). The span at 49 to 61 (KDGRDGTKGEKGE) shows a compositional bias: basic and acidic residues. Residues Pro-73, Pro-79, Pro-82, and Pro-88 each carry the hydroxyproline modification. The segment covering 75 to 87 (KLGPPGNPGPSGS) has biased composition (pro residues). Residues 93 to 102 (QKGDPGKSPD) show a composition bias toward basic and acidic residues. Residues 112-130 (RKALQTEMARIKKWLTFSL) adopt a coiled-coil conformation. The 112-residue stretch at 134-245 (VGNKFFLTNG…CSTSHLAVCE (112 aa)) folds into the C-type lectin domain. 2 disulfides stabilise this stretch: Cys-155/Cys-244 and Cys-222/Cys-236.

In terms of assembly, oligomeric complex of 3 or more homotrimers. Interacts with MASP1 and MASP2. Interacts with MEP1A and MEP1B and may inhibit their catalytic activity. Interacts with CR1 (via Sushi 24 and Sushi 25 domains). As to quaternary structure, (Microbial infection) Interacts with SARS coronavirus-2/SARS-CoV-2 Spike glycoprotein homotrimer; the interaction is calcium-dependent and modulated by Spike glycoprotein glycosylation state. In terms of tissue distribution, plasma protein produced mainly in the liver.

It localises to the secreted. In terms of biological role, calcium-dependent lectin involved in innate immune defense. Binds mannose, fucose and N-acetylglucosamine on different microorganisms and activates the lectin complement pathway. Binds to late apoptotic cells, as well as to apoptotic blebs and to necrotic cells, but not to early apoptotic cells, facilitating their uptake by macrophages. May bind DNA. Upon SARS coronavirus-2/SARS-CoV-2 infection, activates the complement lectin pathway which leads to the inhibition SARS-CoV-2 infection and a reduction of the induced inflammatory response. In Homo sapiens (Human), this protein is Mannose-binding protein C.